A 190-amino-acid polypeptide reads, in one-letter code: Peptidyl-tRNA hydrolase (190 aa).

Residue tyrosine 14 participates in tRNA binding. The active-site Proton acceptor is the histidine 19. 3 residues coordinate tRNA: tyrosine 64, asparagine 66, and asparagine 112.

Belongs to the PTH family. In terms of assembly, monomer.

The protein localises to the cytoplasm. The catalysed reaction is an N-acyl-L-alpha-aminoacyl-tRNA + H2O = an N-acyl-L-amino acid + a tRNA + H(+). Functionally, hydrolyzes ribosome-free peptidyl-tRNAs (with 1 or more amino acids incorporated), which drop off the ribosome during protein synthesis, or as a result of ribosome stalling. In terms of biological role, catalyzes the release of premature peptidyl moieties from peptidyl-tRNA molecules trapped in stalled 50S ribosomal subunits, and thus maintains levels of free tRNAs and 50S ribosomes. In Chlorobaculum parvum (strain DSM 263 / NCIMB 8327) (Chlorobium vibrioforme subsp. thiosulfatophilum), this protein is Peptidyl-tRNA hydrolase.